The chain runs to 428 residues: Serine--tRNA ligase (428 aa).

Position 235–237 (235–237 (TAE)) interacts with L-serine. Position 266-268 (266-268 (RSE)) interacts with ATP. Glu-289 contacts L-serine. Residue 353–356 (EISS) coordinates ATP. Residue Ser-389 coordinates L-serine.

The protein belongs to the class-II aminoacyl-tRNA synthetase family. Type-1 seryl-tRNA synthetase subfamily. In terms of assembly, homodimer. The tRNA molecule binds across the dimer.

The protein localises to the cytoplasm. The enzyme catalyses tRNA(Ser) + L-serine + ATP = L-seryl-tRNA(Ser) + AMP + diphosphate + H(+). It carries out the reaction tRNA(Sec) + L-serine + ATP = L-seryl-tRNA(Sec) + AMP + diphosphate + H(+). It functions in the pathway aminoacyl-tRNA biosynthesis; selenocysteinyl-tRNA(Sec) biosynthesis; L-seryl-tRNA(Sec) from L-serine and tRNA(Sec): step 1/1. Its function is as follows. Catalyzes the attachment of serine to tRNA(Ser). Is also able to aminoacylate tRNA(Sec) with serine, to form the misacylated tRNA L-seryl-tRNA(Sec), which will be further converted into selenocysteinyl-tRNA(Sec). This Shewanella baltica (strain OS185) protein is Serine--tRNA ligase.